Here is a 266-residue protein sequence, read N- to C-terminus: ATP synthase subunit a (266 aa).

6 helical membrane passes run 38 to 58 (KQML…ILAA), 99 to 119 (LLFS…IPVI), 126 to 146 (HVGG…IIGI), 162 to 182 (GVPW…NFLV), 191 to 211 (LFAT…GIEF), and 224 to 244 (SVLV…IMAL).

Belongs to the ATPase A chain family. F-type ATPases have 2 components, CF(1) - the catalytic core - and CF(0) - the membrane proton channel. CF(1) has five subunits: alpha(3), beta(3), gamma(1), delta(1), epsilon(1). CF(0) has three main subunits: a(1), b(2) and c(9-12). The alpha and beta chains form an alternating ring which encloses part of the gamma chain. CF(1) is attached to CF(0) by a central stalk formed by the gamma and epsilon chains, while a peripheral stalk is formed by the delta and b chains.

The protein localises to the cell membrane. In terms of biological role, key component of the proton channel; it plays a direct role in the translocation of protons across the membrane. The polypeptide is ATP synthase subunit a (Paenarthrobacter aurescens (strain TC1)).